A 74-amino-acid chain; its full sequence is Capsid protein VP2 (74 aa).

The protein resides in the virion. This extremely basic protein may tightly bind to SSV1 DNA. Essential for virus function. This Saccharolobus solfataricus (Sulfolobus solfataricus) protein is Capsid protein VP2 (VP2).